The primary structure comprises 62 residues: Sperm protamine P1 (62 aa).

The tract at residues 1 to 62 is disordered; the sequence is MARYRRHSRS…RRYSRRRRRY (62 aa).

The protein belongs to the protamine P1 family. Testis.

Its subcellular location is the nucleus. It is found in the chromosome. Protamines substitute for histones in the chromatin of sperm during the haploid phase of spermatogenesis. They compact sperm DNA into a highly condensed, stable and inactive complex. This chain is Sperm protamine P1 (PRM1), found in Sminthopsis longicaudata (Long-tailed dunnart).